Consider the following 134-residue polypeptide: Profilin-4 (134 aa).

Cys13 and Cys118 are disulfide-bonded. An Involved in PIP2 interaction motif is present at residues 84 to 100 (AVIRGKKGSGGITIKKT). Thr114 is modified (phosphothreonine).

The protein belongs to the profilin family. In terms of assembly, occurs in many kinds of cells as a complex with monomeric actin in a 1:1 ratio. Phosphorylated by MAP kinases.

It is found in the cytoplasm. Its subcellular location is the cytoskeleton. Its function is as follows. Binds to actin and affects the structure of the cytoskeleton. At high concentrations, profilin prevents the polymerization of actin, whereas it enhances it at low concentrations. This chain is Profilin-4, found in Olea europaea (Common olive).